We begin with the raw amino-acid sequence, 377 residues long: Anhydro-N-acetylmuramic acid kinase (377 aa).

12–19 contributes to the ATP binding site; the sequence is GTSLDGID.

Belongs to the anhydro-N-acetylmuramic acid kinase family.

The enzyme catalyses 1,6-anhydro-N-acetyl-beta-muramate + ATP + H2O = N-acetyl-D-muramate 6-phosphate + ADP + H(+). Its pathway is amino-sugar metabolism; 1,6-anhydro-N-acetylmuramate degradation. The protein operates within cell wall biogenesis; peptidoglycan recycling. Its function is as follows. Catalyzes the specific phosphorylation of 1,6-anhydro-N-acetylmuramic acid (anhMurNAc) with the simultaneous cleavage of the 1,6-anhydro ring, generating MurNAc-6-P. Is required for the utilization of anhMurNAc either imported from the medium or derived from its own cell wall murein, and thus plays a role in cell wall recycling. This Methylorubrum extorquens (strain CM4 / NCIMB 13688) (Methylobacterium extorquens) protein is Anhydro-N-acetylmuramic acid kinase.